A 2465-amino-acid polypeptide reads, in one-letter code: Highly reducing polyketide synthase milA (2465 aa).

One can recognise a Ketosynthase family 3 (KS3) domain in the interval 1–434 (MEPIAIVGSA…GANCHVILEG (434 aa)). Residues Cys-172, His-311, and His-355 each act as for beta-ketoacyl synthase activity in the active site. Residues 450–476 (KPSLSSSPSLSPTSTSPPTPRTPANSL) form a disordered region. Residues 451-463 (PSLSSSPSLSPTS) are compositionally biased toward low complexity. A malonyl-CoA:ACP transacylase (MAT) domain region spans residues 567 to 888 (VFTGQGAQWA…CGTLSRAVDD (322 aa)). The tract at residues 957–1096 (HPLLGVRTNT…GKVQLFVGGD (140 aa)) is N-terminal hotdog fold. The dehydratase (DH) domain stretch occupies residues 957–1265 (HPLLGVRTNT…LTVSPVAPVT (309 aa)). The PKS/mFAS DH domain occupies 957-1267 (HPLLGVRTNT…VSPVAPVTAD (311 aa)). His-989 (proton acceptor; for dehydratase activity) is an active-site residue. A C-terminal hotdog fold region spans residues 1111-1267 (LNEIDVDTFY…VSPVAPVTAD (157 aa)). Asp-1174 (proton donor; for dehydratase activity) is an active-site residue. The segment at 1334–1367 (HSTNGLTNGHASTNGHGSTNGHISTNGHSTNGDV) is disordered. Residues 2095-2269 (TYFLVGMAGS…AASVINLTGV (175 aa)) form a ketoreductase (KR)domain region. One can recognise a Carrier domain in the interval 2384-2459 (DMIFRAFQTV…QVVWSVVHQI (76 aa)). Residue Ser-2419 is modified to O-(pantetheine 4'-phosphoryl)serine.

The cofactor is pantetheine 4'-phosphate.

The enzyme catalyses 10 malonyl-CoA + acetyl-CoA + 3 AH2 + 8 NADPH + 18 H(+) = cordypyrone A + 3 A + 10 CO2 + 8 NADP(+) + 11 CoA + 8 H2O. The protein operates within secondary metabolite biosynthesis. Its function is as follows. Highly reducing polyketide synthase (HR-PKS); part of the gene cluster that mediates the biosynthesis of cordypyrones A and B, 2 pyrones that show modest activities against pathogenic bacteria including methicillin-resistant Staphylococcus aureus (MRSA), Mycobacterium tuberculosis and Bacillus cereus. The HR-PKS milA catalyzes the formation of cordypyrones A via condensation of one acetate with 10 malonate units. Since milA lacks an enoyl reductase domain, the 2 beta-keto processing domains DH and KR of milA collaborate with the trans-enoyl reductase milB to catalyze the different levels of reduction. The cytochrome P450 monooxygenase milC then hydroxylates the C-22 of cordypyrones A to yield cordypyrones B. This Cordyceps militaris (strain CM01) (Caterpillar fungus) protein is Highly reducing polyketide synthase milA.